An 85-amino-acid polypeptide reads, in one-letter code: Large ribosomal subunit protein bL27 (85 aa).

A disordered region spans residues 1–22; sequence MAHKKAGGSTRNGRDSESKRLG.

Belongs to the bacterial ribosomal protein bL27 family.

In Aliivibrio fischeri (strain ATCC 700601 / ES114) (Vibrio fischeri), this protein is Large ribosomal subunit protein bL27.